The sequence spans 497 residues: Envelope glycoprotein E (497 aa).

At 1–398 (MCVFQILIIV…GTIIYDILLT (398 aa)) the chain is on the virion surface side. Residues Asn60, Asn133, Asn148, Asn203, Asn277, Asn366, and Asn388 are each glycosylated (N-linked (GlcNAc...) asparagine; by host). Residues 399–419 (SLSIGAIIIVIVGGVCIAILI) form a helical membrane-spanning segment. The Intravirion portion of the chain corresponds to 420-497 (RRRRRRRTRG…KIRKRLDLYH (78 aa)).

This sequence belongs to the alphaherpesvirinae glycoprotein E family. Interacts with gI. Phosphorylated within the acidic cluster. Phosphorylation determines whether endocytosed viral gE traffics to the trans-Golgi network or recycles to the cell membrane.

Its subcellular location is the virion membrane. The protein localises to the host cell membrane. It is found in the host cell junction. The protein resides in the host Golgi apparatus membrane. It localises to the host endosome membrane. Its function is as follows. In epithelial cells, the heterodimer gE/gI is required for the cell-to-cell spread of the virus, by sorting nascent virions to cell junctions. Once the virus reaches the cell junctions, virus particles can spread to adjacent cells extremely rapidly through interactions with cellular receptors that accumulate at these junctions. Implicated in basolateral spread in polarized cells. In neuronal cells, gE/gI is essential for the anterograde spread of the infection throughout the host nervous system. Together with US9, the heterodimer gE/gI is involved in the sorting and transport of viral structural components toward axon tips. This chain is Envelope glycoprotein E (MDV096), found in Gallus gallus (Chicken).